The chain runs to 452 residues: UPF0210 protein Csac_1314 (452 aa).

The protein belongs to the UPF0210 family. As to quaternary structure, homodimer.

This is UPF0210 protein Csac_1314 from Caldicellulosiruptor saccharolyticus (strain ATCC 43494 / DSM 8903 / Tp8T 6331).